The sequence spans 431 residues: Adenylosuccinate synthetase (431 aa).

GTP is bound by residues 13 to 19 and 41 to 43; these read GDEGKGK and GHT. The active-site Proton acceptor is the Asp14. Mg(2+) contacts are provided by Asp14 and Gly41. IMP contacts are provided by residues 14 to 17, 39 to 42, Thr130, Arg144, Gln225, Thr240, and Arg304; these read DEGK and NAGH. Catalysis depends on His42, which acts as the Proton donor. 300-306 provides a ligand contact to substrate; that stretch reads ATTGRKR. Residues Arg306, 332 to 334, and 415 to 417 contribute to the GTP site; these read KLD and STG.

Belongs to the adenylosuccinate synthetase family. As to quaternary structure, homodimer. Mg(2+) serves as cofactor.

Its subcellular location is the cytoplasm. The enzyme catalyses IMP + L-aspartate + GTP = N(6)-(1,2-dicarboxyethyl)-AMP + GDP + phosphate + 2 H(+). The protein operates within purine metabolism; AMP biosynthesis via de novo pathway; AMP from IMP: step 1/2. Functionally, plays an important role in the de novo pathway of purine nucleotide biosynthesis. Catalyzes the first committed step in the biosynthesis of AMP from IMP. The chain is Adenylosuccinate synthetase from Shewanella oneidensis (strain ATCC 700550 / JCM 31522 / CIP 106686 / LMG 19005 / NCIMB 14063 / MR-1).